Consider the following 276-residue polypeptide: MKKWFAVIGDPIEHSKSPAMHNAWFEEMSVEATYIPLHVSSEQLGAAVAGLKTLGASGWNVTIPHKTAIIPYLDELDELAQKMGAVNTVVRTTEGKLIGYNTDGVGFVRSLEEAVGSSHKDKPVLLVGAGGAARGIAFAMQQQGYSDLTMTNRTVANAQAIVDEMGIGRAISLKEAEETLAHFSIIVQMTSAGLATGNFSMPFSLNRLAKGAIVADIVYNPLMTPFLQAAEEKGATIVTGLGMFVHQGAIAFEHWLGDYPNTNSMIVQLNAQLGGN.

Shikimate is bound by residues 15 to 17 (SKS) and Thr62. Catalysis depends on Lys66, which acts as the Proton acceptor. Glu78 provides a ligand contact to NADP(+). Shikimate-binding residues include Asn87 and Asp103. Residues 128–132 (GAGGA) and Ile217 each bind NADP(+). Tyr219 is a binding site for shikimate. NADP(+) is bound at residue Gly240.

The protein belongs to the shikimate dehydrogenase family. As to quaternary structure, homodimer.

It catalyses the reaction shikimate + NADP(+) = 3-dehydroshikimate + NADPH + H(+). Its pathway is metabolic intermediate biosynthesis; chorismate biosynthesis; chorismate from D-erythrose 4-phosphate and phosphoenolpyruvate: step 4/7. Its function is as follows. Involved in the biosynthesis of the chorismate, which leads to the biosynthesis of aromatic amino acids. Catalyzes the reversible NADPH linked reduction of 3-dehydroshikimate (DHSA) to yield shikimate (SA). This chain is Shikimate dehydrogenase (NADP(+)), found in Lysinibacillus sphaericus (strain C3-41).